The primary structure comprises 77 residues: MMSKGVLVGVVTDARRDKTVKVSVYRMVHHKVYKKIVKKCRIYSVHDEHNRCKRGDVVKIREHIPVSATKRWIVVDS.

Belongs to the universal ribosomal protein uS17 family. In terms of assembly, part of the 30S ribosomal subunit.

Its function is as follows. One of the primary rRNA binding proteins, it binds specifically to the 5'-end of 16S ribosomal RNA. This chain is Small ribosomal subunit protein uS17, found in Anaplasma marginale (strain St. Maries).